A 153-amino-acid chain; its full sequence is Arginine repressor (153 aa).

This sequence belongs to the ArgR family.

The protein resides in the cytoplasm. The protein operates within amino-acid biosynthesis; L-arginine biosynthesis [regulation]. In terms of biological role, regulates arginine biosynthesis genes. This chain is Arginine repressor, found in Clostridium tetani (strain Massachusetts / E88).